We begin with the raw amino-acid sequence, 231 residues long: Chromosome partition protein MukE (231 aa).

Positions 204–231 (TPEPSQQSLLENPTAEYDEEQTEWEDEA) are disordered. A compositionally biased stretch (acidic residues) spans 219–231 (EYDEEQTEWEDEA).

This sequence belongs to the MukE family. In terms of assembly, interacts, and probably forms a ternary complex, with MukF and MukB. The complex formation is stimulated by calcium or magnesium.

The protein resides in the cytoplasm. It is found in the nucleoid. Involved in chromosome condensation, segregation and cell cycle progression. May participate in facilitating chromosome segregation by condensation DNA from both sides of a centrally located replisome during cell division. Probably acts via its interaction with MukB and MukF. The polypeptide is Chromosome partition protein MukE (Vibrio cholerae serotype O1 (strain ATCC 39315 / El Tor Inaba N16961)).